A 289-amino-acid chain; its full sequence is Cell division protein ZipA (289 aa).

Residue Met-1 is a topological domain, periplasmic. Residues 2–22 (DIGLREWLIVIGLIVIAGILF) traverse the membrane as a helical segment. Residues 23-289 (DGWRRMRGGK…HERRSLMQKR (267 aa)) lie on the Cytoplasmic side of the membrane. The segment at 65-141 (HREPSFDEQD…KEREKAPAVA (77 aa)) is disordered. Basic and acidic residues predominate over residues 81–99 (RETKERKGGKRQEEPRQGD). Residues 100–114 (LDLDEGLALEADPSD) show a composition bias toward acidic residues.

It belongs to the ZipA family. In terms of assembly, interacts with FtsZ via their C-terminal domains.

The protein resides in the cell inner membrane. In terms of biological role, essential cell division protein that stabilizes the FtsZ protofilaments by cross-linking them and that serves as a cytoplasmic membrane anchor for the Z ring. Also required for the recruitment to the septal ring of downstream cell division proteins. This is Cell division protein ZipA from Pseudomonas aeruginosa (strain UCBPP-PA14).